We begin with the raw amino-acid sequence, 491 residues long: Ketol-acid reductoisomerase (NADP(+)) (491 aa).

Positions 15–208 constitute a KARI N-terminal Rossmann domain; the sequence is AQLGKCRFMG…GGHRAGVLES (194 aa). NADP(+) is bound by residues 45–48, arginine 68, arginine 76, serine 78, and 108–110; these read CGAQ and DKQ. Histidine 132 is a catalytic residue. Glycine 158 contributes to the NADP(+) binding site. KARI C-terminal knotted domains are found at residues 209 to 344 and 345 to 484; these read SFVA…TAPQ and YEGK…MTDM. Residues aspartate 217, glutamate 221, glutamate 389, and glutamate 393 each coordinate Mg(2+). Residue serine 414 coordinates substrate.

It belongs to the ketol-acid reductoisomerase family. The cofactor is Mg(2+).

It carries out the reaction (2R)-2,3-dihydroxy-3-methylbutanoate + NADP(+) = (2S)-2-acetolactate + NADPH + H(+). The enzyme catalyses (2R,3R)-2,3-dihydroxy-3-methylpentanoate + NADP(+) = (S)-2-ethyl-2-hydroxy-3-oxobutanoate + NADPH + H(+). It functions in the pathway amino-acid biosynthesis; L-isoleucine biosynthesis; L-isoleucine from 2-oxobutanoate: step 2/4. Its pathway is amino-acid biosynthesis; L-valine biosynthesis; L-valine from pyruvate: step 2/4. In terms of biological role, involved in the biosynthesis of branched-chain amino acids (BCAA). Catalyzes an alkyl-migration followed by a ketol-acid reduction of (S)-2-acetolactate (S2AL) to yield (R)-2,3-dihydroxy-isovalerate. In the isomerase reaction, S2AL is rearranged via a Mg-dependent methyl migration to produce 3-hydroxy-3-methyl-2-ketobutyrate (HMKB). In the reductase reaction, this 2-ketoacid undergoes a metal-dependent reduction by NADPH to yield (R)-2,3-dihydroxy-isovalerate. The sequence is that of Ketol-acid reductoisomerase (NADP(+)) from Salmonella typhimurium (strain LT2 / SGSC1412 / ATCC 700720).